Reading from the N-terminus, the 135-residue chain is MKFSQRTLLKLKNKNKKLRPNKYKKLKRETLRGRIKGTVERPRLSVYRSNENIYAQIIDDTNSKTLISCSTLDRSIKLVISTGRTCDASRLMGEKLAKLSLKKNITKIVFDRGPYLYHGRIKAVADGARAGGLQF.

It belongs to the universal ribosomal protein uL18 family. In terms of assembly, part of the 50S ribosomal subunit; contacts the 5S rRNA.

The protein localises to the plastid. It localises to the chloroplast. Functionally, binds 5S rRNA, forms part of the central protuberance of the 50S subunit. The sequence is that of Large ribosomal subunit protein uL18c (rpl18) from Phaeodactylum tricornutum (strain CCAP 1055/1).